The primary structure comprises 132 residues: Large ribosomal subunit protein bL17 (132 aa).

This sequence belongs to the bacterial ribosomal protein bL17 family. As to quaternary structure, part of the 50S ribosomal subunit. Contacts protein L32.

The sequence is that of Large ribosomal subunit protein bL17 from Ralstonia pickettii (strain 12J).